The chain runs to 199 residues: MNPSGLESLIEALRCLPGIGPKSAQRMAYHLLQRDRPGAQRLGDAVLHALQAIRHCQRCNTFTEGDICERCASPRRDPELLCVVETPVDMNMMEQTLTYRGMYYVLMGKISPLDGVGPKELGLDRLMTRALDGVVKEVILATNYTNEGEATAHYITAMLKPKGVGVTRIARGVPVGGELEYVDSGTLAQALRERKICGD.

The segment at 56–71 (CQRCNTFTEGDICERC) adopts a C4-type zinc-finger fold. The Toprim domain occupies 79–174 (ELLCVVETPV…GVTRIARGVP (96 aa)).

The protein belongs to the RecR family.

Functionally, may play a role in DNA repair. It seems to be involved in an RecBC-independent recombinational process of DNA repair. It may act with RecF and RecO. The protein is Recombination protein RecR of Dechloromonas aromatica (strain RCB).